The sequence spans 343 residues: Aspartate beta-hydroxylase domain-containing protein 2 (343 aa).

Topologically, residues 1–31 (MWLEWLVAWSWSLDGLRDCIATGIQSVRDCD) are cytoplasmic. Residues 32-52 (GTAVITVACLLILFVWYCYHV) form a helical membrane-spanning segment. The Lumenal segment spans residues 53-343 (GREQPRPHVS…ALDFIFAPGR (291 aa)). N-linked (GlcNAc...) asparagine glycosylation is found at N77 and N185. 2 residues coordinate 2-oxoglutarate: W202 and S246. H257 serves as a coordination point for Fe cation. 266-268 (RCH) serves as a coordination point for 2-oxoglutarate. Fe cation is bound at residue H302. Position 315 (R315) interacts with 2-oxoglutarate.

This sequence belongs to the aspartyl/asparaginyl beta-hydroxylase family. Fe cation serves as cofactor.

It localises to the membrane. Its function is as follows. May function as 2-oxoglutarate-dependent dioxygenase. This chain is Aspartate beta-hydroxylase domain-containing protein 2 (Asphd2), found in Mus musculus (Mouse).